Here is a 44-residue protein sequence, read N- to C-terminus: F420-non-reducing hydrogenase vhu subunit U (44 aa).

U20 and C23 together coordinate Ni(2+). A non-standard amino acid (selenocysteine) is located at residue U20. A propeptide spans 27–44 (removed in mature form); the sequence is MIVEDAEGNVVFEIVNDE.

Belongs to the [NiFe]/[NiFeSe] hydrogenase large subunit family. The F420-non-reducing hydrogenase vhu is composed of four subunits; VhuA, VhuD, VhuG and VhuU. Ni(2+) serves as cofactor.

The chain is F420-non-reducing hydrogenase vhu subunit U (vhuU) from Methanococcus voltae.